A 480-amino-acid polypeptide reads, in one-letter code: Islet cell autoantigen 1 (480 aa).

Positions 50 to 253 (ASDADLDAKL…TSHTMAAIHE (204 aa)) constitute an AH domain. Basic and acidic residues-rich tracts occupy residues 276-293 (LVEK…REAV) and 306-321 (ENQH…EEGK). 2 disordered regions span residues 276 to 338 (LVEK…ACSG) and 400 to 421 (LKEP…IGSA).

It is found in the cytoplasm. Its subcellular location is the cytosol. It localises to the golgi apparatus membrane. The protein localises to the cytoplasmic vesicle. The protein resides in the secretory vesicle membrane. It is found in the secretory vesicle. Its subcellular location is the synaptic vesicle membrane. May play a role in neurotransmitter secretion. The chain is Islet cell autoantigen 1 from Rattus norvegicus (Rat).